Here is a 453-residue protein sequence, read N- to C-terminus: Serine/threonine-protein phosphatase 2A 55 kDa regulatory subunit B delta isoform (453 aa).

WD repeat units lie at residues 32–71 (AEAD…KSRP), 97–138 (EIEE…KRAE), 181–219 (AHTY…RSFN), and 230–270 (ELTE…LCDR). S285 carries the phosphoserine modification. 3 WD repeats span residues 289–327 (EIIS…RPVE), 344–385 (ENDC…DVTL), and 420–452 (DFNK…QDKI). Phosphotyrosine is present on Y305. T308 carries the phosphothreonine modification.

This sequence belongs to the phosphatase 2A regulatory subunit B family. As to quaternary structure, PP2A consists of a common heterodimeric core enzyme, composed of a 36 kDa catalytic subunit (subunit C) and a 65 kDa constant regulatory subunit (PR65 or subunit A), that associates with a variety of regulatory subunits. Proteins that associate with the core dimer include three families of regulatory subunits B (the R2/B/PR55/B55, R3/B''/PR72/PR130/PR59 and R5/B'/B56 families), the 48 kDa variable regulatory subunit, viral proteins, and cell signaling molecules. Interacts with ENSA (when phosphorylated at 'Ser-67') and ARPP19 (when phosphorylated at 'Ser-62'), leading to inhibit PP2A activity. Interacts with IER5.

Its subcellular location is the cytoplasm. In terms of biological role, substrate-recognition subunit of protein phosphatase 2A (PP2A) that plays a key role in cell cycle by controlling mitosis entry and exit. Involved in chromosome clustering during late mitosis by mediating dephosphorylation of MKI67. The activity of PP2A complexes containing PPP2R2D (PR55-delta) fluctuate during the cell cycle: the activity is high in interphase and low in mitosis. This is Serine/threonine-protein phosphatase 2A 55 kDa regulatory subunit B delta isoform (PPP2R2D) from Homo sapiens (Human).